Here is a 430-residue protein sequence, read N- to C-terminus: Adenylosuccinate synthetase (430 aa).

GTP contacts are provided by residues glycine 12–lysine 18 and glycine 40–threonine 42. Catalysis depends on aspartate 13, which acts as the Proton acceptor. Mg(2+) is bound by residues aspartate 13 and glycine 40. IMP contacts are provided by residues aspartate 13–lysine 16, asparagine 38–histidine 41, threonine 128, arginine 142, glutamine 223, threonine 238, and arginine 302. Histidine 41 acts as the Proton donor in catalysis. Position 298–304 (threonine 298–arginine 304) interacts with substrate. GTP contacts are provided by residues arginine 304, serine 330–aspartate 332, and serine 412–glycine 414.

Belongs to the adenylosuccinate synthetase family. As to quaternary structure, homodimer. Requires Mg(2+) as cofactor.

Its subcellular location is the cytoplasm. It catalyses the reaction IMP + L-aspartate + GTP = N(6)-(1,2-dicarboxyethyl)-AMP + GDP + phosphate + 2 H(+). The protein operates within purine metabolism; AMP biosynthesis via de novo pathway; AMP from IMP: step 1/2. Functionally, plays an important role in the de novo pathway of purine nucleotide biosynthesis. Catalyzes the first committed step in the biosynthesis of AMP from IMP. The polypeptide is Adenylosuccinate synthetase (Streptococcus suis (strain 98HAH33)).